The primary structure comprises 434 residues: Eukaryotic translation initiation factor 3 subunit E (434 aa).

In terms of domain architecture, PCI spans 219 to 392 (FFNHPKGRDL…GHVVMGTQPL (174 aa)).

This sequence belongs to the eIF-3 subunit E family. In terms of assembly, component of the eukaryotic translation initiation factor 3 (eIF-3) complex. The eIF-3 complex interacts with pix. Interacts with mxt.

The protein localises to the cytoplasm. Functionally, component of the eukaryotic translation initiation factor 3 (eIF-3) complex, which is involved in protein synthesis of a specialized repertoire of mRNAs and, together with other initiation factors, stimulates binding of mRNA and methionyl-tRNAi to the 40S ribosome. The eIF-3 complex specifically targets and initiates translation of a subset of mRNAs involved in cell proliferation. The protein is Eukaryotic translation initiation factor 3 subunit E (eIF3-S6) of Drosophila ananassae (Fruit fly).